A 500-amino-acid chain; its full sequence is MGLTVAPFAAWFLAWIALAPLWIFVVSSKRKNYPPSSLLLLGLTWGIGYHGVALFWITGIHPMDWLGVPWWPSLAITIFCWSFISFYGGLFGAIWAACLTHISEQKSWLRILIGTAMWCVLESLWSAGPLWWSSLAYTQSPHNLAILHLGQISGPNLVTAAIVSVNGIVAEAWLNRKQGLLGRYLAIATGLLITLHLIGFGLYTAPIAKSSDTALKVGIVQGNIPNKIKLLPQGLSRAITGYTDGYLTLVNQGVEAVLTPEGALPFFQRNLPTTPLVSAVREKGVVAWIGAFGDRGRSYTNSLFTVNSQGEITSRYDKSKLVPLGEYIPFEGIIGGLVQRLSPLDEHQVHGSPNQIFDTPFGRAIVGICYESAFPEVFRSQAAAGGQFILSSSNDAHYSAAMPFQHHAQDIMRAIETDRWSARATNTGYSAFVDPHGRTLWISGYNTYETHAETIYRRQTQNLYVRWGDWFTPLLVGLSFLGWSLNIFWRNDANANSKLR.

Transmembrane regions (helical) follow at residues 5-25 (VAPFAAWFLAWIALAPLWIFV), 38-58 (LLLLGLTWGIGYHGVALFWIT), 74-94 (LAITIFCWSFISFYGGLFGAI), 111-131 (ILIGTAMWCVLESLWSAGPLW), 145-165 (AILHLGQISGPNLVTAAIVSV), and 185-205 (LAIATGLLITLHLIGFGLYTA). Positions 215–462 (LKVGIVQGNI…ETIYRRQTQN (248 aa)) constitute a CN hydrolase domain. Glutamate 261 serves as the catalytic Proton acceptor. Lysine 318 is a catalytic residue. The Nucleophile role is filled by cysteine 369. The helical transmembrane segment at 469–489 (DWFTPLLVGLSFLGWSLNIFW) threads the bilayer.

The protein belongs to the CN hydrolase family. Apolipoprotein N-acyltransferase subfamily.

Its subcellular location is the cell inner membrane. The enzyme catalyses N-terminal S-1,2-diacyl-sn-glyceryl-L-cysteinyl-[lipoprotein] + a glycerophospholipid = N-acyl-S-1,2-diacyl-sn-glyceryl-L-cysteinyl-[lipoprotein] + a 2-acyl-sn-glycero-3-phospholipid + H(+). It functions in the pathway protein modification; lipoprotein biosynthesis (N-acyl transfer). Functionally, catalyzes the phospholipid dependent N-acylation of the N-terminal cysteine of apolipoprotein, the last step in lipoprotein maturation. The protein is Apolipoprotein N-acyltransferase of Nostoc sp. (strain PCC 7120 / SAG 25.82 / UTEX 2576).